A 272-amino-acid polypeptide reads, in one-letter code: 2-succinyl-6-hydroxy-2,4-cyclohexadiene-1-carboxylate synthase (272 aa).

It belongs to the AB hydrolase superfamily. MenH family. In terms of assembly, monomer.

It carries out the reaction 5-enolpyruvoyl-6-hydroxy-2-succinyl-cyclohex-3-ene-1-carboxylate = (1R,6R)-6-hydroxy-2-succinyl-cyclohexa-2,4-diene-1-carboxylate + pyruvate. It participates in quinol/quinone metabolism; 1,4-dihydroxy-2-naphthoate biosynthesis; 1,4-dihydroxy-2-naphthoate from chorismate: step 3/7. The protein operates within quinol/quinone metabolism; menaquinone biosynthesis. Catalyzes a proton abstraction reaction that results in 2,5-elimination of pyruvate from 2-succinyl-5-enolpyruvyl-6-hydroxy-3-cyclohexene-1-carboxylate (SEPHCHC) and the formation of 2-succinyl-6-hydroxy-2,4-cyclohexadiene-1-carboxylate (SHCHC). The protein is 2-succinyl-6-hydroxy-2,4-cyclohexadiene-1-carboxylate synthase of Yersinia pseudotuberculosis serotype I (strain IP32953).